A 583-amino-acid polypeptide reads, in one-letter code: MPLPQGDVTALFLGPPGSGKSALIAALCGKNVDTVEIPDGRQDSGVPSLRAAAPGLFLGELSCPPAAPGPWAAEANLLVLVLPGSEGSEEPLTPALGEAARAALARGTPLLAVRNLRPGDSQNAAKARDETAALLNSAGLGAAPLFVPPADCSSSDRCEELERLQVVLRTQAEALQRLLPPAQDGFEVLGAAELEAVREAFETGGLEAALSWVRAGLERLGSARLDLAVAGTTNVGLVLDMLLGLDPGDPGAAPASAPTGPTPYPAPERPNVVLWTVPLGPTATSPAVTPHPTHYDALILVTPGAPTEENWAQVRSLVSPDAPLVGVRTDGQGEDPPEVLEEEKAQNASDGNSGDARSEGKKAGIGDSGCTAARSPEDELWEVLEEAPPPVFPMRPGGLPGLGTWLQHALPTAQAGALLLALPPASPRAARRKAAALRAGAWRPALLASLAAAAAPVPGLGWACDVALLRGQLAEWRRALGLEPAAVARRERALGLAPGVLATRTRFPGPVTRAEVEARLGSWAGEGTAGGAALSALSFLWPTGGAAATGGLGYRAAHGVLLQALDEMLADAEAVLGPPEPNQ.

Cysteine 152 and cysteine 158 are joined by a disulfide. The stretch at 155 to 179 (SDRCEELERLQVVLRTQAEALQRLL) forms a coiled coil. Positions 186-189 (FEVL) match the LIR 1 motif. Threonine 203 is modified (phosphothreonine). The 187-residue stretch at 223-409 (ARLDLAVAGT…PGLGTWLQHA (187 aa)) folds into the IRG-type G domain. The tract at residues 322 to 373 (APLVGVRTDGQGEDPPEVLEEEKAQNASDGNSGDARSEGKKAGIGDSGCTAA) is disordered. Positions 332-341 (QGEDPPEVLE) are enriched in acidic residues. Positions 381–384 (WEVL) match the LIR 2 motif.

The protein belongs to the TRAFAC class dynamin-like GTPase superfamily. IRG family. Interacts (via LIR motif 1) with GABARAPL2. Interacts (via LIR motif 2) with MAP1LC3B/LC3B.

Its subcellular location is the lysosome. The protein localises to the cytoplasmic vesicle. It is found in the autophagosome. Its function is as follows. Autophagy receptor that specifically promotes clearance of misfolded MHC class I molecules by targeting them to the lysosome for degradation. Acts as a molecular adapter that specifically recognizes and binds (1) misfolded MHC class I molecules following their ubiquitination, as well as (2) autophagy-related proteins, promoting the recruitment of misfolded MHC class I molecules to autophagy machinery for degradation. Degradation of misfolded MHC class I molecules is essential to prevent accumulation of defective MHC class I complexes at the surface of CD8(+) T-cells and prevent a stronger T-cell-mediated response. In contrast to other members of the family, does not show GTPase activity. The sequence is that of Immunity-related GTPase family Q protein (Irgq) from Mus musculus (Mouse).